We begin with the raw amino-acid sequence, 451 residues long: MRGAYYIITALLVVASSQELRGSGHQLQIYDHDVVKAVKAVMKTLPNRFLRESRDVHDDLANEERSFYSILADIINKGMDTMPRAAEGVELMPNAAEGVEKMPRAAEGVETIPHAAEGVENMPHVPDEGLSKALTGAKTALNKLWGPFSATTPIGDASHDVSSREQIDFEIGSWSIDLRGFKPIAVHDQHKDMIQRVYTKFGQLCGNNLNPTAEETSLIWTMFDSRIVPSSSKDDRLKLIWQARQNVRSDMRSISSSKKWRYRWQGSPDSLTLDVLNSLLNMHYQRWVRMYDIFKQERPDLIDAPSNSKHTLGGNKDSSSATTLHKHSKGLSSRPFEPLNAVMMSHGDRFVSTQRSKRTFGSNADTVSLPLKQPKMRSSKALMPLSATLGDYSVPPLKSRLNFGGASSAFVPYTHPKAHTSKSLAPASTTLTLKDSELELSLGGIYDKNTG.

The signal sequence occupies residues 1–17; sequence MRGAYYIITALLVVASS. The RxLR-dEER motif lies at 48–65; the sequence is RFLRESRDVHDDLANEER. The tract at residues 303–336 is disordered; that stretch reads DAPSNSKHTLGGNKDSSSATTLHKHSKGLSSRPF. A compositionally biased stretch (polar residues) spans 305–323; that stretch reads PSNSKHTLGGNKDSSSATT.

Belongs to the RxLR effector family.

Its subcellular location is the secreted. It is found in the host nucleus. Functionally, secreted effector that completely suppresses the host cell death induced by cell death-inducing proteins. The chain is Secreted RxLR effector protein 70 from Plasmopara viticola (Downy mildew of grapevine).